The sequence spans 88 residues: Large ribosomal subunit protein bL31B (88 aa).

The protein belongs to the bacterial ribosomal protein bL31 family. Type B subfamily. Part of the 50S ribosomal subunit.

In Leuconostoc mesenteroides subsp. mesenteroides (strain ATCC 8293 / DSM 20343 / BCRC 11652 / CCM 1803 / JCM 6124 / NCDO 523 / NBRC 100496 / NCIMB 8023 / NCTC 12954 / NRRL B-1118 / 37Y), this protein is Large ribosomal subunit protein bL31B.